The following is a 363-amino-acid chain: 3-isopropylmalate dehydrogenase (363 aa).

Position 78-91 (78-91 (GPKWENLPPESQPE)) interacts with NAD(+). Arg-99, Arg-109, Arg-138, and Asp-227 together coordinate substrate. Positions 227, 251, and 255 each coordinate Mg(2+). 285–297 (GSAPDIAGKNIAN) contributes to the NAD(+) binding site.

The protein belongs to the isocitrate and isopropylmalate dehydrogenases family. LeuB type 1 subfamily. Homodimer. Mg(2+) is required as a cofactor. The cofactor is Mn(2+).

It localises to the cytoplasm. The enzyme catalyses (2R,3S)-3-isopropylmalate + NAD(+) = 4-methyl-2-oxopentanoate + CO2 + NADH. It participates in amino-acid biosynthesis; L-leucine biosynthesis; L-leucine from 3-methyl-2-oxobutanoate: step 3/4. Functionally, catalyzes the oxidation of 3-carboxy-2-hydroxy-4-methylpentanoate (3-isopropylmalate) to 3-carboxy-4-methyl-2-oxopentanoate. The product decarboxylates to 4-methyl-2 oxopentanoate. This Salmonella paratyphi A (strain ATCC 9150 / SARB42) protein is 3-isopropylmalate dehydrogenase.